Here is a 275-residue protein sequence, read N- to C-terminus: 4-diphosphocytidyl-2-C-methyl-D-erythritol kinase (275 aa).

Residue lysine 14 is part of the active site. Residue 98–108 coordinates ATP; the sequence is PMGAGLGGGSS. Aspartate 140 is an active-site residue.

Belongs to the GHMP kinase family. IspE subfamily.

The catalysed reaction is 4-CDP-2-C-methyl-D-erythritol + ATP = 4-CDP-2-C-methyl-D-erythritol 2-phosphate + ADP + H(+). Its pathway is isoprenoid biosynthesis; isopentenyl diphosphate biosynthesis via DXP pathway; isopentenyl diphosphate from 1-deoxy-D-xylulose 5-phosphate: step 3/6. Catalyzes the phosphorylation of the position 2 hydroxy group of 4-diphosphocytidyl-2C-methyl-D-erythritol. The polypeptide is 4-diphosphocytidyl-2-C-methyl-D-erythritol kinase (Francisella tularensis subsp. holarctica (strain FTNF002-00 / FTA)).